A 173-amino-acid chain; its full sequence is Large ribosomal subunit protein uL10 (173 aa).

This sequence belongs to the universal ribosomal protein uL10 family. As to quaternary structure, part of the ribosomal stalk of the 50S ribosomal subunit. The N-terminus interacts with L11 and the large rRNA to form the base of the stalk. The C-terminus forms an elongated spine to which L12 dimers bind in a sequential fashion forming a multimeric L10(L12)X complex.

In terms of biological role, forms part of the ribosomal stalk, playing a central role in the interaction of the ribosome with GTP-bound translation factors. This chain is Large ribosomal subunit protein uL10, found in Cupriavidus pinatubonensis (strain JMP 134 / LMG 1197) (Cupriavidus necator (strain JMP 134)).